The following is a 347-amino-acid chain: Probable zinc transporter 8 (347 aa).

Residues 1-27 (MATTTQHMNQIFLVLLLISFAISPAIS) form the signal peptide. Over 28–51 (TVPKECETDSTDSCIDKTKALPLK) the chain is Extracellular. The chain crosses the membrane as a helical span at residues 52-72 (IVAIVAILVTSMIGVAAPLFS). Topologically, residues 73 to 83 (RYVTFLHPDGK) are cytoplasmic. Residues 84 to 104 (IFMIIKCFASGIILGTGFMHV) traverse the membrane as a helical segment. At 105–124 (LPDSFEMLSSPCLEDNPWHK) the chain is on the extracellular side. Residues 125-145 (FPFTGFVAMLSGLVTLAIDSI) form a helical membrane-spanning segment. Residues 146-192 (ATSLYTKKAVADDSEERTTPMIIQIDHLPLTTKERSSTCSKQLLRYR) are Cytoplasmic-facing. Residues 193-213 (VIATVLELGIIVHSVVIGLSL) form a helical membrane-spanning segment. Over 214-224 (GATNDTCTIKG) the chain is Extracellular. A helical membrane pass occupies residues 225–245 (LIAALCFHQMFEGMGLGGCIL). At 246-254 (QAEYTNVKK) the chain is on the cytoplasmic side. The chain crosses the membrane as a helical span at residues 255 to 275 (FVMAFFFAVTTPSGIALGIAL). Topologically, residues 276–286 (SSVYKDNSPTA) are extracellular. A helical transmembrane segment spans residues 287 to 307 (LITVGLLNACSAGLLIYMALV). Over 308 to 326 (DLLAAEFMGSMLQRSVKLQ) the chain is Cytoplasmic. The helical transmembrane segment at 327–347 (LNCFGAALLGCGGMSVLAKWA) threads the bilayer.

It belongs to the ZIP transporter (TC 2.A.5) family.

Its subcellular location is the cell membrane. Probably mediates zinc uptake from the rhizosphere. This chain is Probable zinc transporter 8 (ZIP8), found in Arabidopsis thaliana (Mouse-ear cress).